Consider the following 190-residue polypeptide: Potassium-transporting ATPase KdpC subunit (190 aa).

A helical transmembrane segment spans residues 13–33; sequence VGFLLLTLVCGVVYPGIVTII.

The protein belongs to the KdpC family. As to quaternary structure, the system is composed of three essential subunits: KdpA, KdpB and KdpC.

The protein localises to the cell membrane. Its function is as follows. Part of the high-affinity ATP-driven potassium transport (or Kdp) system, which catalyzes the hydrolysis of ATP coupled with the electrogenic transport of potassium into the cytoplasm. This subunit acts as a catalytic chaperone that increases the ATP-binding affinity of the ATP-hydrolyzing subunit KdpB by the formation of a transient KdpB/KdpC/ATP ternary complex. The chain is Potassium-transporting ATPase KdpC subunit from Listeria welshimeri serovar 6b (strain ATCC 35897 / DSM 20650 / CCUG 15529 / CIP 8149 / NCTC 11857 / SLCC 5334 / V8).